The sequence spans 154 residues: Ribosomal RNA large subunit methyltransferase H (154 aa).

S-adenosyl-L-methionine is bound at residue Gly102.

The protein belongs to the RNA methyltransferase RlmH family. Homodimer.

It is found in the cytoplasm. The catalysed reaction is pseudouridine(1915) in 23S rRNA + S-adenosyl-L-methionine = N(3)-methylpseudouridine(1915) in 23S rRNA + S-adenosyl-L-homocysteine + H(+). Functionally, specifically methylates the pseudouridine at position 1915 (m3Psi1915) in 23S rRNA. The chain is Ribosomal RNA large subunit methyltransferase H from Phenylobacterium zucineum (strain HLK1).